The chain runs to 218 residues: Adenylate kinase (218 aa).

An ATP-binding site is contributed by 10-15 (GAGKGT). The NMP stretch occupies residues 30-59 (STGDMLRAAVKAGSEMGLKAKAVMDAGQLV). AMP contacts are provided by residues Thr-31, Arg-36, 57 to 59 (QLV), 85 to 88 (GFPR), and Gln-92. Residues 122 to 159 (GRRVHEASGRTYHLVYNPPKVEGKDDVTGEDLVQRADD) are LID. Residues Arg-123 and 132–133 (TY) contribute to the ATP site. Residues Arg-156 and Arg-167 each coordinate AMP. ATP is bound at residue Gly-203.

This sequence belongs to the adenylate kinase family. As to quaternary structure, monomer.

The protein resides in the cytoplasm. The catalysed reaction is AMP + ATP = 2 ADP. The protein operates within purine metabolism; AMP biosynthesis via salvage pathway; AMP from ADP: step 1/1. In terms of biological role, catalyzes the reversible transfer of the terminal phosphate group between ATP and AMP. Plays an important role in cellular energy homeostasis and in adenine nucleotide metabolism. This chain is Adenylate kinase, found in Marinomonas sp. (strain MWYL1).